Here is a 102-residue protein sequence, read N- to C-terminus: MQKARIRLTGTDFNKVEMVCDKIREIAERTGVNLAGPIPLPTKRLVVPIRKSPDGEGTATWDRWQMRVHKRLIDIDADERALRQLMRIQVPKDIGIEIVLES.

It belongs to the universal ribosomal protein uS10 family. As to quaternary structure, part of the 30S ribosomal subunit.

Functionally, involved in the binding of tRNA to the ribosomes. The protein is Small ribosomal subunit protein uS10 of Methanosphaerula palustris (strain ATCC BAA-1556 / DSM 19958 / E1-9c).